The sequence spans 299 residues: Methylsterol monooxygenase 1-2 (299 aa).

The next 3 membrane-spanning stretches (helical) occupy residues 39–59 (CHNILFLFLIFSLVPLPLVFI), 96–116 (FILVVGPLQLVSYPSIQMIEI), and 118–138 (SGLPLPSCMEIVAQLVVYFLV). The Fatty acid hydroxylase domain occupies 132-267 (LVVYFLVEDY…FTYCDYIYGT (136 aa)). Positions 147-151 (HRFFH) match the Histidine box-1 motif. A Histidine box-2 motif is present at residues 160 to 164 (HHIHH). A helical membrane pass occupies residues 189 to 209 (TFLGPAIAPGHMITFWLWIAL). Residues 239 to 245 (YHDYHHY) carry the Histidine box-3 motif.

It belongs to the sterol desaturase family. Interacts with ACBP1. Requires Fe cation as cofactor. In terms of tissue distribution, expressed in embryo sacs, pollen and trichomes. Observed in leaves, roots, siliques and flowers.

It localises to the endoplasmic reticulum membrane. It carries out the reaction 4,4-dimethyl-5alpha-cholest-7-en-3beta-ol + 6 Fe(II)-[cytochrome b5] + 3 O2 + 5 H(+) = 4alpha-carboxy-4beta-methyl-5alpha-cholest-7-ene-3beta-ol + 6 Fe(III)-[cytochrome b5] + 4 H2O. It catalyses the reaction 24-methylenecycloartanol + 6 Fe(II)-[cytochrome b5] + 3 O2 + 5 H(+) = 4alpha-carboxy-4beta,14alpha-dimethyl-9beta,19-cyclo-5alpha-ergost-24(24(1))-en-3beta-ol + 6 Fe(III)-[cytochrome b5] + 4 H2O. Its function is as follows. Non-heme iron oxygenase involved in sterols biosynthesis by catalyzing the removal of the first methyl group at the C-4 position. 4,4-dimethyl-9-beta,19-cyclopropylsterols such as 24-methylenecycloartanol are the preferred substrates. Acts as a rate-limiting enzyme in the sterol pathway via interaction with ACBP1; sterols serve as lipid modulators for gene expression of homeodomain-leucine zipper IV transcription factors. Together with SMO1-1, involved in the maintenance of sterol composition to balance auxin and cytokinin activities during embryogenesis. This is Methylsterol monooxygenase 1-2 from Arabidopsis thaliana (Mouse-ear cress).